Reading from the N-terminus, the 86-residue chain is Large ribosomal subunit protein eL43 (86 aa).

The Zn(2+) site is built by Cys38, Cys41, Cys56, and Cys59. A C4-type zinc finger spans residues 38-59 (CPVCGRKAVRRISTGIWQCQKC).

This sequence belongs to the eukaryotic ribosomal protein eL43 family. In terms of assembly, part of the 50S ribosomal subunit. Zn(2+) serves as cofactor.

The chain is Large ribosomal subunit protein eL43 from Thermococcus kodakarensis (strain ATCC BAA-918 / JCM 12380 / KOD1) (Pyrococcus kodakaraensis (strain KOD1)).